The primary structure comprises 1133 residues: Probable cation-transporting ATPase 9 (1133 aa).

At 1–6 the chain is on the cytoplasmic side; it reads MRVSSI. The chain crosses the membrane as a helical span at residues 7-28; it reads EAEMENPIDVDKTDVEGELKIK. Over 29–34 the chain is Extracellular; that stretch reads QVTLLR. The helical transmembrane segment at 35 to 53 threads the bilayer; that stretch reads ENIVKKIVFFLVAIFCSDR. Residues 54–167 are Cytoplasmic-facing; the sequence is PSVLKKVFYE…IEINVPSFLT (114 aa). Residues 168-190 form a helical membrane-spanning segment; the sequence is LMWREFKKPINFLLYFGIIVWGI. Topologically, residues 191–193 are extracellular; the sequence is EQM. Residues 194-212 form a helical membrane-spanning segment; the sequence is YVSTAITVVFTTTINSLIC. Over 213 to 363 the chain is Cytoplasmic; sequence IYIRGVMQKL…PFNKKFQQQA (151 aa). The chain crosses the membrane as a helical span at residues 364–383; that stretch reads VKLTILMATLLLIGFLSTLS. At 384-396 the chain is on the extracellular side; that stretch reads RLLDIELPPLFIA. A helical transmembrane segment spans residues 397–418; sequence FRFLDILIYSAPPGMPMLIAIT. Residues 419–887 are Cytoplasmic-facing; it reads NFVGLKRLKN…NSVEIFKGYL (469 aa). Asp-451 acts as the 4-aspartylphosphate intermediate in catalysis. Residues Asp-827 and Asp-831 each contribute to the Mg(2+) site. A helical membrane pass occupies residues 888 to 906; that stretch reads QVALLRYLGFLTLAYFYSS. The Extracellular portion of the chain corresponds to 907–915; the sequence is YSSGQMDWQ. A helical transmembrane segment spans residues 916-931; sequence ALASGYFLVYLILGCN. Residues 932 to 948 are Cytoplasmic-facing; sequence TPLKKLEKSVFDDNLFS. Residues 949–972 form a helical membrane-spanning segment; the sequence is IYNVTSVLFGFTLHILSIVGCVES. Residues 973-994 are Extracellular-facing; it reads LHASPIYKEVNSLDAENNFQFE. The helical transmembrane segment at 995–1018 threads the bilayer; that stretch reads TQHNTVLNFNILINFFYVIISNHI. Residues 1019 to 1030 are Cytoplasmic-facing; the sequence is GKPMKDRYYKNT. Residues 1031–1050 traverse the membrane as a helical segment; sequence IAIYYDLGLIYTCKCMILQV. Over 1051 to 1101 the chain is Extracellular; it reads LLILEHTHHGLIFLILLLDQEFSSSLTVQVYFSLPMNLFLPEEFSLNFTQE. A helical transmembrane segment spans residues 1102–1124; it reads VKKEKELLICNSSSTILEVDYNL. The Cytoplasmic portion of the chain corresponds to 1125–1133; that stretch reads RLNYFQQNF.

The protein belongs to the cation transport ATPase (P-type) (TC 3.A.3) family. Type V subfamily.

It localises to the membrane. The catalysed reaction is ATP + H2O = ADP + phosphate + H(+). The polypeptide is Probable cation-transporting ATPase 9 (TPA9) (Tetrahymena thermophila).